The sequence spans 346 residues: Protein pelota homolog (346 aa).

The protein belongs to the eukaryotic release factor 1 family. Pelota subfamily. In terms of assembly, monomer. A divalent metal cation is required as a cofactor.

It is found in the cytoplasm. Functionally, may function in recognizing stalled ribosomes, interact with stem-loop structures in stalled mRNA molecules, and effect endonucleolytic cleavage of the mRNA. May play a role in the release non-functional ribosomes and degradation of damaged mRNAs. Has endoribonuclease activity. This is Protein pelota homolog from Ignicoccus hospitalis (strain KIN4/I / DSM 18386 / JCM 14125).